We begin with the raw amino-acid sequence, 391 residues long: Tyrosine recombinase XerC-like (391 aa).

The region spanning 64 to 148 is the Core-binding (CB) domain; sequence VTLGDLMHTW…FLKTFFNYAV (85 aa). A Tyr recombinase domain is found at 175–384; that stretch reads TEIETFSDEE…IPKQKTNAVE (210 aa). Active-site residues include arginine 210, lysine 244, histidine 335, arginine 338, and histidine 361. Residue tyrosine 371 is the O-(3'-phospho-DNA)-tyrosine intermediate of the active site.

This sequence belongs to the 'phage' integrase family.

It localises to the cytoplasm. Functionally, site-specific tyrosine recombinase, which acts by catalyzing the cutting and rejoining of the recombining DNA molecules. The sequence is that of Tyrosine recombinase XerC-like from Caldanaerobacter subterraneus subsp. tengcongensis (strain DSM 15242 / JCM 11007 / NBRC 100824 / MB4) (Thermoanaerobacter tengcongensis).